The primary structure comprises 425 residues: Phosphoribosylamine--glycine ligase (425 aa).

Residues 110–317 (KEFMKRHGIP…LFDALLASVE (208 aa)) enclose the ATP-grasp domain. 137–198 (ETCPTFPQVI…EAFLSGQEAS (62 aa)) contacts ATP. Mg(2+) contacts are provided by Glu287 and Asn289.

The protein belongs to the GARS family. Mg(2+) serves as cofactor. It depends on Mn(2+) as a cofactor.

The enzyme catalyses 5-phospho-beta-D-ribosylamine + glycine + ATP = N(1)-(5-phospho-beta-D-ribosyl)glycinamide + ADP + phosphate + H(+). The protein operates within purine metabolism; IMP biosynthesis via de novo pathway; N(1)-(5-phospho-D-ribosyl)glycinamide from 5-phospho-alpha-D-ribose 1-diphosphate: step 2/2. The chain is Phosphoribosylamine--glycine ligase from Chlorobaculum tepidum (strain ATCC 49652 / DSM 12025 / NBRC 103806 / TLS) (Chlorobium tepidum).